A 100-amino-acid chain; its full sequence is Urease subunit gamma (100 aa).

Belongs to the urease gamma subunit family. As to quaternary structure, heterotrimer of UreA (gamma), UreB (beta) and UreC (alpha) subunits. Three heterotrimers associate to form the active enzyme.

The protein localises to the cytoplasm. It carries out the reaction urea + 2 H2O + H(+) = hydrogencarbonate + 2 NH4(+). The protein operates within nitrogen metabolism; urea degradation; CO(2) and NH(3) from urea (urease route): step 1/1. The sequence is that of Urease subunit gamma from Delftia acidovorans (strain DSM 14801 / SPH-1).